A 1256-amino-acid polypeptide reads, in one-letter code: Centrosome and spindle pole-associated protein 1 (1256 aa).

Coiled coils occupy residues Ala38–Asp62 and Glu114–Leu135. Positions Gly189 to Ser208 are enriched in basic and acidic residues. Disordered stretches follow at residues Gly189–Ser244 and Ala381–Phe403. Positions Leu222 to Asn232 are enriched in polar residues. The residue at position 244 (Ser244) is a Phosphoserine. Residues Ser244 to Leu270 adopt a coiled-coil conformation. A coiled-coil region spans residues Gln417 to Ala449. Residues Ser459 and Ser527 each carry the phosphoserine modification. Residues Ser625–Asn669 adopt a coiled-coil conformation. Disordered stretches follow at residues Ala735–Glu757 and Glu813–Glu853. The span at Asn736 to Pro748 shows a compositional bias: polar residues. A phosphoserine mark is found at Ser901 and Ser920. The segment at Ser913–Ala932 is disordered. Residues Ala925–Met964 are a coiled coil. Residue Ser966 is modified to Phosphoserine. Disordered regions lie at residues Glu1114 to Val1147 and Leu1232 to Gly1256. The span at Phe1246 to Gly1256 shows a compositional bias: polar residues.

As to quaternary structure, interacts with PLEKHG6. Interacts with ARMC9, TOGARAM1, CCDC66, CEP104 and CEP290. Post-translationally, phosphorylated. Phosphorylation increases in colcemide-treated cells. In terms of tissue distribution, expressed in adult and fetal brain with enrichment in the cerebellum. Detected in testis.

It localises to the cytoplasm. The protein resides in the cytoskeleton. The protein localises to the microtubule organizing center. Its subcellular location is the centrosome. It is found in the spindle. It localises to the spindle pole. The protein resides in the cell projection. The protein localises to the cilium. Its function is as follows. May play a role in cell-cycle-dependent microtubule organization. The protein is Centrosome and spindle pole-associated protein 1 (CSPP1) of Homo sapiens (Human).